Consider the following 1661-residue polypeptide: Beta/gamma crystallin domain-containing protein 2 (1661 aa).

Disordered stretches follow at residues 72-135 (EEET…PPCV), 148-168 (PGPREPSPHPGVGLTSGSSRS), 242-268 (VPAGHSPPASHLPRPTAGGPRSTGLGS), 297-321 (PASAHLPKNQDAPAACPDRDQGRAP), 337-380 (STEL…THPG), 411-757 (EHVT…EEDE), 808-871 (LGPW…VSCS), and 883-903 (TKGPHSELGLELQGGSRPTSR). The span at 105–118 (PKEKRPEGRLKEAV) shows a compositional bias: basic and acidic residues. Over residues 337 to 353 (STELPLQTSQGQASVPS) the composition is skewed to polar residues. A compositionally biased stretch (low complexity) spans 431 to 442 (PSPGGLSAPSSP). Composition is skewed to polar residues over residues 507-519 (SSPTQKEVVQGSS), 628-644 (PKSTEVVQGPKGSSSIQ), and 685-697 (SEGSPISSLTQKE). The span at 706-719 (PAPSSSVDRVSPSP) shows a compositional bias: low complexity. Polar residues predominate over residues 731 to 750 (EASTESQLVSDPTEGKTCTE). The segment covering 825-835 (EKEEEEEEEPE) has biased composition (acidic residues). The segment covering 841-851 (DDEKLQRRQEK) has biased composition (basic and acidic residues). 12 Beta/gamma crystallin 'Greek key' domains span residues 986 to 1023 (GKVIFFSESGCQGSGREVWGDIVDASGWAPVASIRVVR), 1024 to 1067 (GCWV…RRVV), 1073 to 1113 (PEIS…TVSA), 1114 to 1156 (GLWL…KPMR), 1168 to 1213 (PRAV…RVLG), 1214 to 1256 (GCWV…RVIR), 1262 to 1302 (PAVV…HVLS), 1303 to 1345 (GVWV…QPVL), 1356 to 1393 (SKIQLFSRPDFLGDHFSFEDDQAALPASFRPQSCRVHG), 1394 to 1437 (GSWI…QKVS), 1443 to 1483 (PSIF…RIKG), and 1484 to 1525 (GIWV…YPIK). Positions 1569-1659 (WYYEDGLLKN…DRASQIWTIH (91 aa)) constitute a Ricin B-type lectin domain.

Belongs to the beta/gamma-crystallin family.

This chain is Beta/gamma crystallin domain-containing protein 2, found in Homo sapiens (Human).